A 491-amino-acid polypeptide reads, in one-letter code: Protein DETOXIFICATION 56 (491 aa).

A run of 12 helical transmembrane segments spans residues Leu39–Leu59, Leu72–Met92, Thr111–Leu131, Leu154–Leu174, Leu181–Leu201, Met212–Val232, Gly261–Thr281, Val291–Leu311, Tyr336–Phe356, Met379–Val399, Met409–Phe429, and Phe438–Ala458.

Belongs to the multi antimicrobial extrusion (MATE) (TC 2.A.66.1) family. In terms of assembly, interacts with BCA4 and HT1. As to expression, preferentially expressed in guard cells.

The protein localises to the cell membrane. Its function is as follows. Could function as a HCO(3)(-) -sensing component in the CO(2) signaling pathway in guard cells. Acts as an upstream repressor of HT1. Plays a role in stomatal response to CO(2). This chain is Protein DETOXIFICATION 56, found in Arabidopsis thaliana (Mouse-ear cress).